The sequence spans 204 residues: Kunitz-type trypsin inhibitor KTI2 (204 aa).

Positions 1–25 (MKSTIFFALFLVCAFTISYLPSATA) are cleaved as a signal peptide. 2 disulfide bridges follow: cysteine 65–cysteine 112 and cysteine 160–cysteine 169.

This sequence belongs to the protease inhibitor I3 (leguminous Kunitz-type inhibitor) family. As to expression, seed, and at low levels in leaf, root, and stem.

Has probably no trypsin inhibitor activity. KTi2 is responsible for most of the Kunitz trypsin inhibitor activity and protein found in soybean seeds. The sequence is that of Kunitz-type trypsin inhibitor KTI2 (KTI2) from Glycine max (Soybean).